We begin with the raw amino-acid sequence, 551 residues long: Chaperonin GroEL 2 (551 aa).

ATP-binding positions include 30–33 (TLGP), Lys51, 87–91 (DGTTT), Gly415, and Asp496.

It belongs to the chaperonin (HSP60) family. In terms of assembly, forms a cylinder of 14 subunits composed of two heptameric rings stacked back-to-back. Interacts with the co-chaperonin GroES.

Its subcellular location is the cytoplasm. It catalyses the reaction ATP + H2O + a folded polypeptide = ADP + phosphate + an unfolded polypeptide.. Functionally, together with its co-chaperonin GroES, plays an essential role in assisting protein folding. The GroEL-GroES system forms a nano-cage that allows encapsulation of the non-native substrate proteins and provides a physical environment optimized to promote and accelerate protein folding. The sequence is that of Chaperonin GroEL 2 from Rhodopseudomonas palustris (strain BisB18).